The primary structure comprises 57 residues: Preprotein translocase subunit SecG (57 aa).

Over 1–33 (MARRRKYEGLNPFVAAGLIKFSEEGELERIKLN) the chain is Cytoplasmic. The helical transmembrane segment at 34 to 55 (PRTAILVSITVIIAILVLNILH) threads the bilayer. The Extracellular portion of the chain corresponds to 56–57 (PL).

Belongs to the SEC61-beta family. As to quaternary structure, component of the protein translocase complex. Heterotrimer consisting of alpha (SecY), beta (SecG) and gamma (SecE) subunits. Can form oligomers of the heterotrimer.

Its subcellular location is the cell membrane. Its function is as follows. Involved in protein export. The function of the beta subunit is unknown, but it may be involved in stabilization of the trimeric complex. This chain is Preprotein translocase subunit SecG, found in Pyrobaculum islandicum (strain DSM 4184 / JCM 9189 / GEO3).